Consider the following 327-residue polypeptide: Ketol-acid reductoisomerase (NADP(+)) (327 aa).

The KARI N-terminal Rossmann domain maps to 2 to 182 (AKIYTDKDAS…GATRAGVIET (181 aa)). NADP(+) contacts are provided by residues 25–28 (YGIQ), arginine 48, serine 53, and 83–86 (DMEQ). The active site involves histidine 108. Residue glycine 134 participates in NADP(+) binding. In terms of domain architecture, KARI C-terminal knotted spans 183-327 (TFAEETETDL…GAEMRKLLFG (145 aa)). Mg(2+)-binding residues include aspartate 191, glutamate 195, glutamate 227, and glutamate 231. Serine 252 serves as a coordination point for substrate.

It belongs to the ketol-acid reductoisomerase family. It depends on Mg(2+) as a cofactor.

It catalyses the reaction (2R)-2,3-dihydroxy-3-methylbutanoate + NADP(+) = (2S)-2-acetolactate + NADPH + H(+). It carries out the reaction (2R,3R)-2,3-dihydroxy-3-methylpentanoate + NADP(+) = (S)-2-ethyl-2-hydroxy-3-oxobutanoate + NADPH + H(+). Its pathway is amino-acid biosynthesis; L-isoleucine biosynthesis; L-isoleucine from 2-oxobutanoate: step 2/4. It functions in the pathway amino-acid biosynthesis; L-valine biosynthesis; L-valine from pyruvate: step 2/4. Its function is as follows. Involved in the biosynthesis of branched-chain amino acids (BCAA). Catalyzes an alkyl-migration followed by a ketol-acid reduction of (S)-2-acetolactate (S2AL) to yield (R)-2,3-dihydroxy-isovalerate. In the isomerase reaction, S2AL is rearranged via a Mg-dependent methyl migration to produce 3-hydroxy-3-methyl-2-ketobutyrate (HMKB). In the reductase reaction, this 2-ketoacid undergoes a metal-dependent reduction by NADPH to yield (R)-2,3-dihydroxy-isovalerate. In Pyrobaculum neutrophilum (strain DSM 2338 / JCM 9278 / NBRC 100436 / V24Sta) (Thermoproteus neutrophilus), this protein is Ketol-acid reductoisomerase (NADP(+)).